The following is a 742-amino-acid chain: Two pore calcium channel protein 1 (742 aa).

The tract at residues 1–44 (MSEAQAPLITEEAAERGLASSGSRRLSDGGGGQGSRKYRRRSDA) is disordered. Residues 1-82 (MSEAQAPLIT…NDTRFGRAMS (82 aa)) are Cytoplasmic-facing. The helical transmembrane segment at 83-103 (FYFVYLRLDWLWSLNIFALIL) threads the bilayer. The Extracellular portion of the chain corresponds to 104 to 140 (LNFLEKPLWCRKDALHACDQRDMYFLGQLPYFSKTES). The helical transmembrane segment at 141–161 (LIYEGLTLVILVMEILCPLSY) threads the bilayer. Residues 162–176 (EGLNIFWRSTTNKLK) lie on the Cytoplasmic side of the membrane. The chain crosses the membrane as a helical span at residues 177–197 (ILLLFILACDILVFAFSSQPF). At 198–204 (RLAPYIR) the chain is on the extracellular side. Residues 205-226 (VVFLIMTIRELRMCAITLAGLI) traverse the membrane as a helical; Voltage-sensor segment. The helical transmembrane segment at 227 to 247 (GTYLNVLALSLLFLLFASWLA) threads the bilayer. Residues 248 to 258 (YVTFEDTPQGK) are Extracellular-facing. An intramembrane region (pore-forming) is located at residues 259–273 (TIFSSYGVTLYQMFV). At 274–296 (LFTTSNNPDVWVPAYKISRWYSL) the chain is on the extracellular side. The chain crosses the membrane as a helical span at residues 297-317 (FFIVYVLLGVYFLTNLILAVI). The Cytoplasmic portion of the chain corresponds to 318–446 (YDSFKEQFAK…SFVRSRTFEY (129 aa)). EF-hand domains lie at 335–370 (IRKN…LNKY) and 376–411 (TSRE…IAIK). Residues 447–467 (IIVFVLLINLVAVIIETTLDI) form a helical membrane-spanning segment. Topologically, residues 468-480 (ENSSSQETWQEVE) are extracellular. Asparagine 469 carries an N-linked (GlcNAc...) asparagine glycan. A helical transmembrane segment spans residues 481–501 (FFLGWIYVAEMALKIFSLGFG). Residues 502-510 (AYWMEGQNK) are Cytoplasmic-facing. The chain crosses the membrane as a helical span at residues 511 to 531 (FDFVLTWTIFIGETLTFAFPS). At 532-540 (KLPFLSNGE) the chain is on the extracellular side. Residues 541–558 (WIRYLLLGRVLRLTRILL) form a helical; Voltage-sensor membrane-spanning segment. Residues 559–582 (QVQRFRVFVATFFTLMSSLMPYLG) lie on the Cytoplasmic side of the membrane. The helical transmembrane segment at 583–603 (IVFCILCMYCSLGLQIFGGIV) threads the bilayer. At 604–627 (YAGNPTLEETDLFSNDYLLFNFND) the chain is on the extracellular side. The segment at residues 628-642 (YPSGMVTLFNLLVMG) is an intramembrane region (pore-forming). The Extracellular portion of the chain corresponds to 643–663 (NWQVWMESYWQLTGSSWSLIY). Residues 664–684 (FVSFYLISILLLLNLIVAFVL) form a helical membrane-spanning segment. The Cytoplasmic segment spans residues 685-742 (EAFFAEMELEKGEEVDIQSPTSGGIKKRRSMRVRSKGTMVDILLHHMLSNELDGSQNS).

It belongs to the calcium channel alpha-1 subunit (TC 1.A.1.11) family. Two pore calcium channel subfamily. As to quaternary structure, homodimer.

Its subcellular location is the membrane. Its activity is regulated as follows. Inhibited by Al(3+). Functions as a voltage-gated inward-rectifying Ca(2+) channel (VDCC) across the plasma membrane that mediates sucrose-induced Ca(2+) influx in autotrophically grown leaf cells. Acts as the major ROS-responsive Ca(2+) channel and is the possible target of Al-dependent inhibition. Plays a regulatory role in defense responses. In Hordeum vulgare (Barley), this protein is Two pore calcium channel protein 1 (TPC1).